We begin with the raw amino-acid sequence, 222 residues long: Flagellar L-ring protein (222 aa).

The first 18 residues, 1 to 18, serve as a signal peptide directing secretion; it reads MKTTRAIAMLGLLLGLAA. Cys19 is lipidated: N-palmitoyl cysteine. A lipid anchor (S-diacylglycerol cysteine) is attached at Cys19.

It belongs to the FlgH family. In terms of assembly, the basal body constitutes a major portion of the flagellar organelle and consists of four rings (L,P,S, and M) mounted on a central rod.

Its subcellular location is the cell outer membrane. It localises to the bacterial flagellum basal body. Functionally, assembles around the rod to form the L-ring and probably protects the motor/basal body from shearing forces during rotation. This Thiobacillus denitrificans (strain ATCC 25259 / T1) protein is Flagellar L-ring protein.